A 1765-amino-acid chain; its full sequence is RANBP2-like and GRIP domain-containing protein 8 (1765 aa).

Thr19 carries the phosphothreonine modification. Ser21 carries the post-translational modification Phosphoserine. 3 TPR repeats span residues 26–59 (SMKG…QERD), 60–93 (PKAH…NPTQ), and 648–681 (EDAH…VSYW). The disordered stretch occupies residues 760-804 (GPLYKNGSLRNADSEIKHSTPSPTKYSLSPSKSYKYSPETPPRWT). Over residues 778–797 (STPSPTKYSLSPSKSYKYSP) the composition is skewed to low complexity. One can recognise a RanBD1 1 domain in the interval 1036–1172 (HFEPVVQMPE…FEECQRLLLD (137 aa)). Disordered stretches follow at residues 1216–1247 (TEEE…PTLE) and 1306–1330 (AKLN…EERD). The segment covering 1231–1244 (SDTTIKPNAENTGP) has biased composition (polar residues). The segment covering 1317-1329 (TDEESVVTQEEER) has biased composition (acidic residues). One can recognise a RanBD1 2 domain in the interval 1333–1469 (YFEPVVPLPD…FDEAKTAQEK (137 aa)). Residues 1580–1593 (NNSETSSVAQSGSE) show a composition bias toward polar residues. 2 disordered regions span residues 1580–1621 (NNSE…KNLS) and 1746–1765 (KGKL…RSSG). Residues 1594–1617 (SKVEPKKCELSKNSDIEQSSDSKV) show a composition bias toward basic and acidic residues. One can recognise a GRIP domain in the interval 1702–1752 (REKSAANLEYLKNVLLQFIFLKPGSERERLLPVINTMLQLSPEEKGKLAAV).

As to quaternary structure, interacts with GTP-bound ARL1.

The polypeptide is RANBP2-like and GRIP domain-containing protein 8 (RGPD8) (Homo sapiens (Human)).